The primary structure comprises 1350 residues: Protein transport protein SEC16A homolog (1350 aa).

5 disordered regions span residues 26–45, 73–97, 964–1063, 1118–1216, and 1235–1350; these read YTPT…GSDS, LGND…SIAP, MPPP…TRKV, AEEA…KPPI, and QVME…EVEL. The segment covering 35–45 has biased composition (basic and acidic residues); that stretch reads KELKFDDGSDS. The residue at position 43 (serine 43) is a Phosphoserine. Residues 970–1002 show a composition bias toward polar residues; it reads HSTTGNPQVNEYQHQQQEAAKLSYSQSANTMSS. Over residues 1150–1168 the composition is skewed to low complexity; it reads SPSSGSWSSGSPTPSENSP. Composition is skewed to polar residues over residues 1195-1210 and 1289-1316; these read TYNQ…PPVQ and RSGS…GSVN. Residues 1317–1343 show a composition bias toward low complexity; sequence SSSFMSPTSASTFRPSPLNSSSSSLGE.

The protein belongs to the SEC16 family. As to quaternary structure, interacts with SEC13A, SEC13B and SEC31A.

It is found in the golgi apparatus. The protein resides in the golgi stack. Its subcellular location is the endoplasmic reticulum. Required for efficient protein export from the endoplasmic reticulum (ER) to the Golgi by regulating COPII coat dynamics at the ER. Functions as a scaffold and regulator of COPII coat assembly at ER exit sites. This chain is Protein transport protein SEC16A homolog, found in Arabidopsis thaliana (Mouse-ear cress).